The following is a 152-amino-acid chain: Protein SprT-like (152 aa).

One can recognise a SprT-like domain in the interval 7–148 (QRLVEEVSLQ…GKCKGKLILI (142 aa)). A Zn(2+)-binding site is contributed by histidine 67. Residue glutamate 68 is part of the active site. A Zn(2+)-binding site is contributed by histidine 71.

The protein belongs to the SprT family. Zn(2+) is required as a cofactor.

The protein localises to the cytoplasm. In Bacillus thuringiensis subsp. konkukian (strain 97-27), this protein is Protein SprT-like.